Reading from the N-terminus, the 95-residue chain is Bombyxin F-1 (95 aa).

The signal sequence occupies residues 1-19 (MKLVVIVLLVISVSILVSA). Disulfide bonds link Cys-29–Cys-82, Cys-41–Cys-95, and Cys-81–Cys-86. Residues 53-71 (NSDMVYEDSGMPELLPADT) constitute a propeptide, c peptide like.

This sequence belongs to the insulin family. In terms of assembly, heterodimer of a B chain and an A chain linked by two disulfide bonds.

Its subcellular location is the secreted. The sequence is that of Bombyxin F-1 (BBXF1) from Bombyx mori (Silk moth).